A 462-amino-acid chain; its full sequence is Centrosomal protein of 55 kDa (462 aa).

The span at 1 to 11 (MSSRSPKDLIK) shows a compositional bias: basic and acidic residues. Positions 1–25 (MSSRSPKDLIKSKWGSRPSSSKSDT) are disordered. Residues 12–23 (SKWGSRPSSSKS) show a composition bias toward low complexity. 2 coiled-coil regions span residues 50–185 (KVAN…QQWL) and 228–400 (YLQE…KQLH). Phosphoserine is present on residues Ser96 and Ser99. An interaction with TSG101 region spans residues 157–235 (ANCFNSSMNS…EGYLQEEKQK (79 aa)). The tract at residues 160-214 (FNSSMNSIHEKEMQLKDALEKNQQWLVYDQQREAYVKGLLAKIFELEKRTETAAA) is interaction with PDCD6IP. A required for localization to the interphase centrosome and to the midbody during cytokinesis region spans residues 354-462 (QMQACTLDFE…LLVHVEYCMK (109 aa)). Phosphoserine occurs at positions 423 and 426. The residue at position 428 (Thr428) is a Phosphothreonine. At Ser434 the chain carries Phosphoserine; by PLK1.

Homodimer. Interacts (phosphorylated on Ser-423 and Ser-426) with PLK1; the interaction is indirect via the MTMR3:MTMR4 heterooligomer, occurs during early mitosis, regulates the phosphorylation of CEP55 by PLK1 and its recruitment to the midbody where it can mediate cell abscission. Interacts with AKAP9/CG-NAP; the interaction occurs in interphase and is lost upon mitotic entry. Interacts with PCNT/Kendrin; the interaction occurs in interphase and is lost upon mitotic entry. Directly interacts with PDCD6IP; this interaction is required for PDCD6IP targeting to the midbody; CEP55 binds PDCD6IP in a 2:1 stoichiometry; PDCD6IP competes with TSG101 for the same binding site. Interacts with TSG101; TSG101 competes with PDCD6IP for the same binding site; interaction is required for cytokinesis. Interacts with MVB12A, VPS37B, VPS37C and VPS28. Post-translationally, there is a hierachy of phosphorylation, where both Ser-423 and Ser-426 are phosphorylated at the onset of mitosis, prior to Ser-434. Phosphorylation at Ser-423 and Ser-426 is required for dissociation from the centrosome at the G2/M boundary. Phosphorylation at the 3 sites, Ser-423, Ser-426 and Ser-434, is required for protein function at the final stages of cell division to complete cytokinesis successfully.

It is found in the cytoplasm. Its subcellular location is the cytoskeleton. It localises to the microtubule organizing center. The protein localises to the centrosome. The protein resides in the centriole. It is found in the cleavage furrow. Its subcellular location is the midbody. It localises to the midbody ring. In terms of biological role, plays a role in mitotic exit and cytokinesis. Recruits PDCD6IP and TSG101 to midbody during cytokinesis. Required for successful completion of cytokinesis. Not required for microtubule nucleation. Plays a role in the development of the brain and kidney. The protein is Centrosomal protein of 55 kDa of Rattus norvegicus (Rat).